The chain runs to 315 residues: Alpha- and gamma-adaptin-binding protein p34 (315 aa).

The interval 197-233 is disordered; that stretch reads IGSADPCHPEQPHLPAADRTESLSDHRGGASNTTDAQ. The span at 203-224 shows a compositional bias: basic and acidic residues; that stretch reads CHPEQPHLPAADRTESLSDHRG. S310 and S311 each carry phosphoserine.

In terms of assembly, associated with AP-1 and AP-2 complexes.

It localises to the cytoplasm. The protein localises to the cytosol. In terms of biological role, may be involved in endocytic recycling of growth factor receptors such as EGFR. This chain is Alpha- and gamma-adaptin-binding protein p34 (AAGAB), found in Pongo abelii (Sumatran orangutan).